The sequence spans 296 residues: Phosphoribosylaminoimidazole-succinocarboxamide synthase (296 aa).

Belongs to the SAICAR synthetase family.

It carries out the reaction 5-amino-1-(5-phospho-D-ribosyl)imidazole-4-carboxylate + L-aspartate + ATP = (2S)-2-[5-amino-1-(5-phospho-beta-D-ribosyl)imidazole-4-carboxamido]succinate + ADP + phosphate + 2 H(+). Its pathway is purine metabolism; IMP biosynthesis via de novo pathway; 5-amino-1-(5-phospho-D-ribosyl)imidazole-4-carboxamide from 5-amino-1-(5-phospho-D-ribosyl)imidazole-4-carboxylate: step 1/2. This Lachnospira eligens (strain ATCC 27750 / DSM 3376 / VPI C15-48 / C15-B4) (Eubacterium eligens) protein is Phosphoribosylaminoimidazole-succinocarboxamide synthase.